Consider the following 274-residue polypeptide: 4-diphosphocytidyl-2-C-methyl-D-erythritol kinase (274 aa).

The active site involves Lys-8. 94–104 contacts ATP; it reads PSGAGLGGGSS. The active site involves Asp-136.

Belongs to the GHMP kinase family. IspE subfamily.

It carries out the reaction 4-CDP-2-C-methyl-D-erythritol + ATP = 4-CDP-2-C-methyl-D-erythritol 2-phosphate + ADP + H(+). It functions in the pathway isoprenoid biosynthesis; isopentenyl diphosphate biosynthesis via DXP pathway; isopentenyl diphosphate from 1-deoxy-D-xylulose 5-phosphate: step 3/6. Functionally, catalyzes the phosphorylation of the position 2 hydroxy group of 4-diphosphocytidyl-2C-methyl-D-erythritol. The sequence is that of 4-diphosphocytidyl-2-C-methyl-D-erythritol kinase from Bacteroides thetaiotaomicron (strain ATCC 29148 / DSM 2079 / JCM 5827 / CCUG 10774 / NCTC 10582 / VPI-5482 / E50).